The chain runs to 545 residues: Glucose-6-phosphate isomerase (545 aa).

Residue E351 is the Proton donor of the active site. Residues H382 and K510 contribute to the active site.

This sequence belongs to the GPI family.

The protein resides in the cytoplasm. The enzyme catalyses alpha-D-glucose 6-phosphate = beta-D-fructose 6-phosphate. It participates in carbohydrate biosynthesis; gluconeogenesis. Its pathway is carbohydrate degradation; glycolysis; D-glyceraldehyde 3-phosphate and glycerone phosphate from D-glucose: step 2/4. In terms of biological role, catalyzes the reversible isomerization of glucose-6-phosphate to fructose-6-phosphate. In Helicobacter pylori (strain P12), this protein is Glucose-6-phosphate isomerase.